A 171-amino-acid chain; its full sequence is Nudix hydrolase DR_0079 (171 aa).

The Nudix hydrolase domain maps to E32–L162. Positions G69–N91 match the Nudix box motif. Mg(2+) is bound by residues E85 and E89.

The protein belongs to the Nudix hydrolase family. Monomer. Requires Mg(2+) as cofactor.

Inhibited by zinc, calcium or copper ions. Hydrolase that converts various nucleotide triphosphates (NTPs) to the corresponding nucleotide monophosphates and diphosphate, and nucleotide diphosphates to nucleotide monophosphates and inorganic phosphate. Has a marked preference for cytosine ribonucleoside 5'-diphosphate (CDP) and cytosine ribonucleoside 5'-triphosphate (CTP). Has lower activity towards the deoxyribose nucleotides dCDP and dCTP, and towards dGDP, TDP and UDP. The chain is Nudix hydrolase DR_0079 from Deinococcus radiodurans (strain ATCC 13939 / DSM 20539 / JCM 16871 / CCUG 27074 / LMG 4051 / NBRC 15346 / NCIMB 9279 / VKM B-1422 / R1).